We begin with the raw amino-acid sequence, 437 residues long: MSAPRVSFVSLGCPKALVDSERIITSLRSEGYEISRKHDGADLVIVNTCGFLDSARDESLDAIGLALNENGKVIVTGCLGAEPDVIRERHPNVLAITGPQAYESVMSAVHEAVPPAHDPFVDLVPPQGVKLTPRHYAYLKISEGCSNRCSFCIIPALRGDLVSRPIDSVLREAEKLVNAGVKEILVISQDTSAYGLDIKYQEAMWQDRTVRTKFLDLSRELGDMGVWVRMHYVYPYPHVDEVIPLMAEGKILPYLDIPFQHASPAVLKNMRRPAHQEKTSRRIQAWRETCPDLAVRSTFIVGYPGETEEDFEILLDWLDEAKIERAGCFKYEPVKGAKANDLGLEQVPEEIKEARWHRFMAKQQQISTNLLKKKVGKRLPVIIDEANGTIGKGRTRYDAPEIDGSVHIQSRRPLRVGDIVTVKIEASDAYDLHGIAV.

Residues 4–114 (PRVSFVSLGC…VMSAVHEAVP (111 aa)) enclose the MTTase N-terminal domain. [4Fe-4S] cluster is bound by residues Cys13, Cys49, Cys78, Cys145, Cys149, and Cys152. Positions 131–369 (LTPRHYAYLK…MAKQQQISTN (239 aa)) constitute a Radical SAM core domain. The region spanning 372–437 (KKKVGKRLPV…DAYDLHGIAV (66 aa)) is the TRAM domain.

This sequence belongs to the methylthiotransferase family. RimO subfamily. [4Fe-4S] cluster is required as a cofactor.

It localises to the cytoplasm. The enzyme catalyses L-aspartate(89)-[ribosomal protein uS12]-hydrogen + (sulfur carrier)-SH + AH2 + 2 S-adenosyl-L-methionine = 3-methylsulfanyl-L-aspartate(89)-[ribosomal protein uS12]-hydrogen + (sulfur carrier)-H + 5'-deoxyadenosine + L-methionine + A + S-adenosyl-L-homocysteine + 2 H(+). Its function is as follows. Catalyzes the methylthiolation of an aspartic acid residue of ribosomal protein uS12. This is Ribosomal protein uS12 methylthiotransferase RimO from Brucella anthropi (strain ATCC 49188 / DSM 6882 / CCUG 24695 / JCM 21032 / LMG 3331 / NBRC 15819 / NCTC 12168 / Alc 37) (Ochrobactrum anthropi).